The chain runs to 421 residues: UDP-N-acetylglucosamine 1-carboxyvinyltransferase (421 aa).

A phosphoenolpyruvate-binding site is contributed by 22–23 (KN). R93 lines the UDP-N-acetyl-alpha-D-glucosamine pocket. Catalysis depends on C117, which acts as the Proton donor. C117 carries the 2-(S-cysteinyl)pyruvic acid O-phosphothioketal modification. UDP-N-acetyl-alpha-D-glucosamine is bound by residues 122–126 (RPVDQ), D309, and I331.

It belongs to the EPSP synthase family. MurA subfamily.

Its subcellular location is the cytoplasm. It catalyses the reaction phosphoenolpyruvate + UDP-N-acetyl-alpha-D-glucosamine = UDP-N-acetyl-3-O-(1-carboxyvinyl)-alpha-D-glucosamine + phosphate. Its pathway is cell wall biogenesis; peptidoglycan biosynthesis. In terms of biological role, cell wall formation. Adds enolpyruvyl to UDP-N-acetylglucosamine. The chain is UDP-N-acetylglucosamine 1-carboxyvinyltransferase from Albidiferax ferrireducens (strain ATCC BAA-621 / DSM 15236 / T118) (Rhodoferax ferrireducens).